Here is a 334-residue protein sequence, read N- to C-terminus: Heat-inducible transcription repressor HrcA (334 aa).

Belongs to the HrcA family.

Its function is as follows. Negative regulator of class I heat shock genes (grpE-dnaK-dnaJ and groELS operons). Prevents heat-shock induction of these operons. This is Heat-inducible transcription repressor HrcA from Paracidovorax citrulli (strain AAC00-1) (Acidovorax citrulli).